The following is a 1704-amino-acid chain: Villidin (1704 aa).

4 WD repeats span residues 82 to 122, 133 to 173, 180 to 221, and 225 to 271; these read GHTD…LIKD, KQQK…EQSS, GHED…TPIQ, and THEG…SSQP. 2 disordered regions span residues 439–460 and 606–721; these read IGNSGSGGGGGDGDGNGGDSPF and SVPS…NSST. Residues 442–456 show a composition bias toward gly residues; the sequence is SGSGGGGGDGDGNGG. Residues 459-563 enclose the PH 1 domain; it reads PFITEGIVKQ…WCQSINAYRE (105 aa). 3 stretches are compositionally biased toward low complexity: residues 613–636, 651–701, and 709–721; these read QQQQQQQGSESPNSTTPKSSTPTQ, SLKS…SSSS, and NNSTSSTPLNSST. 2 consecutive PH domains span residues 727-828 and 871-969; these read DIVI…QNLK and EQPL…AARK. The disordered stretch occupies residues 848-877; that stretch reads LISSPMSDDESNTNEGGVEEEEEEQPLEGQ. Residues 854 to 873 are compositionally biased toward acidic residues; that stretch reads SDDESNTNEGGVEEEEEEQP. Gelsolin-like repeat units lie at residues 1025-1119, 1138-1241, 1293-1390, 1404-1494, and 1520-1615; these read KQKI…LGGN, IKTT…FANY, GRVK…FKTK, KKPS…FEST, and RFFV…FRAW. The region spanning 1641 to 1704 is the HP domain; sequence DYLKEIYTYE…EGIKKELFLF (64 aa).

It is found in the membrane. The protein resides in the cytoplasm. It localises to the cytoskeleton. In terms of biological role, may function as a linker between membranes and the actin cytoskeleton. The sequence is that of Villidin (vilA) from Dictyostelium discoideum (Social amoeba).